The chain runs to 422 residues: Vitamin D3 receptor B (422 aa).

The nuclear receptor DNA-binding region spans 20–95; it reads PRICGVCGDK…IGMMKEFILT (76 aa). Zn(2+) is bound by residues Cys-23, Cys-26, Cys-40, Cys-43, Cys-59, Cys-65, Cys-75, and Cys-78. 2 consecutive NR C4-type zinc fingers follow at residues 23–43 and 59–78; these read CGVC…CEGC and CPFN…CQAC. The interval 96 to 125 is hinge; the sequence is DEEVQRKKELIQRRKDEEAHREAQKPRLSD. The interval 106 to 128 is disordered; sequence IQRRKDEEAHREAQKPRLSDEQR. In terms of domain architecture, NR LBD spans 126 to 418; sequence EQRNIIDTLV…LTPLVLEVFG (293 aa). Residue Tyr-142 coordinates calcitriol. Residues 145-190 form a disordered region; that stretch reads SYSDFSRFRPPVREGPVTRSASRAASLHSLSDASSDSFSHSPESGD. The segment covering 163 to 185 has biased composition (low complexity); it reads RSASRAASLHSLSDASSDSFSHS. Residue Ser-234 coordinates calcitriol. The interaction with coactivator LXXLL motif stretch occupies residues 243 to 261; it reads KMIPGFRELTAEDQIALLK. Positions 271, 275, 302, and 392 each coordinate calcitriol. The 9aaTAD motif lies at 411-419; that stretch reads PLVLEVFGG.

The protein belongs to the nuclear hormone receptor family. Homodimer in the absence of bound vitamin D3. Heterodimer with RXRA after vitamin D3 binding. Interacts with ncoa1 and possibly other coactivators, leading to a strong increase of transcription of target genes. As to expression, detected in embryo 24 to 48 hours after fertilization, and in intestinal bulb.

The protein resides in the nucleus. Its subcellular location is the cytoplasm. Its function is as follows. Nuclear receptor for calcitriol, the active form of vitamin D3 which mediates the action of this vitamin on cells. Enters the nucleus upon vitamin D3 binding where it forms heterodimers with the retinoid X receptor/RXR. The VDR-RXR heterodimers bind to specific response elements on DNA and activate the transcription of vitamin D3-responsive target genes. Recruited to promoters via its interaction with BAZ1B/WSTF which mediates the interaction with acetylated histones, an essential step for VDR-promoter association. Plays a central role in calcium homeostasis. The polypeptide is Vitamin D3 receptor B (vdrb) (Danio rerio (Zebrafish)).